The chain runs to 362 residues: Probable dual-specificity RNA methyltransferase RlmN (362 aa).

Glutamate 105 serves as the catalytic Proton acceptor. The region spanning 111–344 (HEYGNSICVT…VTIRREQGHD (234 aa)) is the Radical SAM core domain. Cysteine 118 and cysteine 349 form a disulfide bridge. Residues cysteine 125, cysteine 129, and cysteine 132 each contribute to the [4Fe-4S] cluster site. S-adenosyl-L-methionine contacts are provided by residues 175–176 (GE), serine 207, 230–232 (SLH), and asparagine 306. The active-site S-methylcysteine intermediate is cysteine 349.

It belongs to the radical SAM superfamily. RlmN family. The cofactor is [4Fe-4S] cluster.

The protein resides in the cytoplasm. It carries out the reaction adenosine(2503) in 23S rRNA + 2 reduced [2Fe-2S]-[ferredoxin] + 2 S-adenosyl-L-methionine = 2-methyladenosine(2503) in 23S rRNA + 5'-deoxyadenosine + L-methionine + 2 oxidized [2Fe-2S]-[ferredoxin] + S-adenosyl-L-homocysteine. The enzyme catalyses adenosine(37) in tRNA + 2 reduced [2Fe-2S]-[ferredoxin] + 2 S-adenosyl-L-methionine = 2-methyladenosine(37) in tRNA + 5'-deoxyadenosine + L-methionine + 2 oxidized [2Fe-2S]-[ferredoxin] + S-adenosyl-L-homocysteine. Its function is as follows. Specifically methylates position 2 of adenine 2503 in 23S rRNA and position 2 of adenine 37 in tRNAs. The polypeptide is Probable dual-specificity RNA methyltransferase RlmN (Bacillus cereus (strain B4264)).